The following is a 516-amino-acid chain: Putative protein NRT1/ PTR FAMILY 2.2 (516 aa).

Helical transmembrane passes span 31 to 51, 67 to 87, 90 to 110, 138 to 158, 174 to 194, 201 to 221, 320 to 340, 362 to 382, 394 to 414, 437 to 457, and 476 to 496; these read TLLG…VFLI, IVNG…DSFF, IPVI…LTMI, ILYI…FTLA, FFNW…TAIV, SWKL…IVFV, LLLA…LIIL, VIVI…VYPM, LQKV…SAIV, FIAS…ITLI, and VYWL…AWFY.

This sequence belongs to the major facilitator superfamily. Proton-dependent oligopeptide transporter (POT/PTR) (TC 2.A.17) family. In terms of tissue distribution, not detected.

Its subcellular location is the membrane. Functionally, transporter involved in a passive nitrate efflux. The sequence is that of Putative protein NRT1/ PTR FAMILY 2.2 (NPF2.2) from Arabidopsis thaliana (Mouse-ear cress).